The following is a 300-amino-acid chain: Protein phosphatase 2C 1 (300 aa).

The PPM-type phosphatase domain maps to 23–298 (IFAASEMQGW…DNMTTILVYL (276 aa)). 4 residues coordinate Mn(2+): aspartate 57, glycine 58, aspartate 237, and aspartate 289.

This sequence belongs to the PP2C family. Mg(2+) serves as cofactor. The cofactor is Mn(2+). The N-terminus is blocked.

It localises to the membrane. The catalysed reaction is O-phospho-L-seryl-[protein] + H2O = L-seryl-[protein] + phosphate. The enzyme catalyses O-phospho-L-threonyl-[protein] + H2O = L-threonyl-[protein] + phosphate. Serine and threonine phosphatase. This chain is Protein phosphatase 2C 1, found in Paramecium tetraurelia.